The following is a 196-amino-acid chain: Large ribosomal subunit protein bL9 (196 aa).

Residues glutamine 174–alanine 196 form a disordered region. Over residues glutamine 186–alanine 196 the composition is skewed to polar residues.

The protein belongs to the bacterial ribosomal protein bL9 family.

Its function is as follows. Binds to the 23S rRNA. This is Large ribosomal subunit protein bL9 from Phenylobacterium zucineum (strain HLK1).